A 280-amino-acid polypeptide reads, in one-letter code: Pyridoxal 5'-phosphate synthase subunit PdxS (280 aa).

D-ribose 5-phosphate is bound at residue Asp12. Catalysis depends on Lys69, which acts as the Schiff-base intermediate with D-ribose 5-phosphate. Gly141 is a binding site for D-ribose 5-phosphate. A D-glyceraldehyde 3-phosphate-binding site is contributed by Arg153. D-ribose 5-phosphate is bound by residues Gly202 and 223–224; that span reads GS.

The protein belongs to the PdxS/SNZ family. In the presence of PdxT, forms a dodecamer of heterodimers.

It catalyses the reaction aldehydo-D-ribose 5-phosphate + D-glyceraldehyde 3-phosphate + L-glutamine = pyridoxal 5'-phosphate + L-glutamate + phosphate + 3 H2O + H(+). It functions in the pathway cofactor biosynthesis; pyridoxal 5'-phosphate biosynthesis. Functionally, catalyzes the formation of pyridoxal 5'-phosphate from ribose 5-phosphate (RBP), glyceraldehyde 3-phosphate (G3P) and ammonia. The ammonia is provided by the PdxT subunit. Can also use ribulose 5-phosphate and dihydroxyacetone phosphate as substrates, resulting from enzyme-catalyzed isomerization of RBP and G3P, respectively. This is Pyridoxal 5'-phosphate synthase subunit PdxS from Fusobacterium nucleatum subsp. nucleatum (strain ATCC 25586 / DSM 15643 / BCRC 10681 / CIP 101130 / JCM 8532 / KCTC 2640 / LMG 13131 / VPI 4355).